A 406-amino-acid chain; its full sequence is Homocitrate synthase AksA (406 aa).

A Pyruvate carboxyltransferase domain is found at 32-285 (IYIYDTTLRD…DLGLNLEVLP (254 aa)).

Belongs to the alpha-IPM synthase/homocitrate synthase family.

The catalysed reaction is acetyl-CoA + 2-oxoglutarate + H2O = (2R)-homocitrate + CoA + H(+). The enzyme catalyses 2-oxoadipate + acetyl-CoA + H2O = (R)-dihomocitrate + CoA + H(+). It carries out the reaction 2-oxoheptanedioate + acetyl-CoA + H2O = (R)-trihomocitrate + CoA + H(+). It functions in the pathway organic acid metabolism; 2-oxosuberate biosynthesis. Catalyzes the condensation of alpha-ketoglutarate and acetyl-CoA to form (R)-homocitrate. Can also catalyze the condensation of alpha-ketoadipate with acetyl-CoA to form (R)-homo(2)citrate, and the condensation of alpha-ketopimelate with acetyl-CoA to form (R)-homo(3)citrate. These reactions are part of the biosynthesis pathway of coenzyme B and biotin. The sequence is that of Homocitrate synthase AksA (aksA) from Methanocaldococcus jannaschii (strain ATCC 43067 / DSM 2661 / JAL-1 / JCM 10045 / NBRC 100440) (Methanococcus jannaschii).